Reading from the N-terminus, the 116-residue chain is Ribosome-binding factor A (116 aa).

It belongs to the RbfA family. In terms of assembly, monomer. Binds 30S ribosomal subunits, but not 50S ribosomal subunits or 70S ribosomes.

The protein resides in the cytoplasm. One of several proteins that assist in the late maturation steps of the functional core of the 30S ribosomal subunit. Associates with free 30S ribosomal subunits (but not with 30S subunits that are part of 70S ribosomes or polysomes). Required for efficient processing of 16S rRNA. May interact with the 5'-terminal helix region of 16S rRNA. This chain is Ribosome-binding factor A, found in Clostridium botulinum (strain Eklund 17B / Type B).